A 393-amino-acid chain; its full sequence is Rhizopuspepsin (393 aa).

The N-terminal stretch at 1–21 (MKFTLISSCIAIAALAVAVDA) is a signal peptide. A propeptide spans 22-68 (APGEKKISIPLAKNPNYKPSAKNAIQKAIAKYNKHKINTSTGGIVPD) (activation peptide). In terms of domain architecture, Peptidase A1 spans 85 to 389 (YYGQVTIGTP…NQGVPEVQIA (305 aa)). D103 is a catalytic residue. An intrachain disulfide couples C116 to C119. The active site involves D286. C320 and C353 are joined by a disulfide.

Belongs to the peptidase A1 family.

The catalysed reaction is Hydrolysis of proteins with broad specificity similar to that of pepsin A, preferring hydrophobic residues at P1 and P1'. Clots milk and activates trypsinogen. Does not cleave 4-Gln-|-His-5, but does cleave 10-His-|-Leu-11 and 12-Val-|-Glu-13 in B chain of insulin.. The protein is Rhizopuspepsin of Rhizopus chinensis (Bread mold).